Consider the following 320-residue polypeptide: ATP synthase gamma chain (320 aa).

Belongs to the ATPase gamma chain family. F-type ATPases have 2 components, CF(1) - the catalytic core - and CF(0) - the membrane proton channel. CF(1) has five subunits: alpha(3), beta(3), gamma(1), delta(1), epsilon(1). CF(0) has three main subunits: a, b and c.

It localises to the cell membrane. Its function is as follows. Produces ATP from ADP in the presence of a proton gradient across the membrane. The gamma chain is believed to be important in regulating ATPase activity and the flow of protons through the CF(0) complex. This Lactobacillus helveticus (strain DPC 4571) protein is ATP synthase gamma chain.